A 351-amino-acid chain; its full sequence is Actin maturation protease (351 aa).

A compositionally biased stretch (pro residues) spans 1–19 (MTSPCSPPLKPPISPPKTP). The segment at 1–70 (MTSPCSPPLK…PPAATGPAPR (70 aa)) is disordered. Over residues 36–50 (LDFSALPSPPWSQQT) the composition is skewed to low complexity. Over residues 51 to 64 (PVPPPLPLPPPPAA) the composition is skewed to pro residues. A peptidase C39-like region spans residues 124–244 (SLIQEGPQCG…WAVSAGVLLG (121 aa)). Cysteine 132 is a catalytic residue. Serine 316 is modified (phosphoserine).

This sequence belongs to the ACTMAP family. In terms of assembly, interacts (via N-terminus) with PFN2 isoforms IIa and IIb; the interactions may facilitate efficient cleavage of the acetylated N-terminus of immature actin. Interacts with PFN1.

Its subcellular location is the cytoplasm. It carries out the reaction N-terminal N(alpha)-acetyl-L-methionyl-L-aspartyl-[protein] + H2O = N-terminal L-aspartyl-[protein] + N-acetyl-L-methionine. It catalyses the reaction N-terminal N(alpha)-acetyl-L-methionyl-L-glutamyl-[protein] + H2O = N-terminal L-glutamyl-[protein] + N-acetyl-L-methionine. The catalysed reaction is N-terminal N(alpha)-acetyl-L-cysteinyl-L-aspartyl-[protein] + H2O = N-terminal L-aspartyl-[protein] + N-acetyl-L-cysteine. The enzyme catalyses N-terminal N(alpha)-acetyl-L-cysteinyl-L-glutamyl-[protein] + H2O = N-terminal L-glutamyl-[protein] + N-acetyl-L-cysteine. Actin maturation protease that specifically mediates the cleavage of immature acetylated N-terminal actin, thereby contributing to actin maturation. Cleaves N-terminal acetylated methionine of immature cytoplasmic beta- and gamma-actins ACTB and ACTG1 after translation. Cleaves N-terminal acetylated cysteine of muscle alpha-actins ACTA1, ACTC1 and ACTA2 after canonical removal of N-terminal methionine. In Homo sapiens (Human), this protein is Actin maturation protease.